The following is a 253-amino-acid chain: 5-oxoprolinase subunit A (253 aa).

It belongs to the LamB/PxpA family. In terms of assembly, forms a complex composed of PxpA, PxpB and PxpC.

It carries out the reaction 5-oxo-L-proline + ATP + 2 H2O = L-glutamate + ADP + phosphate + H(+). Functionally, catalyzes the cleavage of 5-oxoproline to form L-glutamate coupled to the hydrolysis of ATP to ADP and inorganic phosphate. In Bacillus cereus (strain ATCC 10987 / NRS 248), this protein is 5-oxoprolinase subunit A.